The primary structure comprises 285 residues: UPF0014 membrane protein STAR2 (285 aa).

A run of 7 helical transmembrane segments spans residues 30–50 (FLVG…AVAL), 64–84 (YAMA…QFIF), 88–108 (SAAW…YTAG), 119–139 (HIAA…LVAL), 148–168 (YIIP…GVTM), 203–225 (SLVI…ALPG), and 240–262 (AIQL…SILS).

The protein belongs to the UPF0014 family. As to quaternary structure, interacts with STAR2. Expressed in roots.

It is found in the membrane. Associates with STAR2 to form a functional transmembrane ABC transporter required for detoxification of aluminum (Al) in roots. Can specifically transport UDP-glucose. The polypeptide is UPF0014 membrane protein STAR2 (Oryza sativa subsp. japonica (Rice)).